The following is a 2224-amino-acid chain: Protein sidekick (2224 aa).

Residues 1–47 (MLKSAASSLRRRRPKTTITATLAIEMPSQPKLASLLAVLVLLCYCDS) form the signal peptide. Over 48-2001 (CFFCYADANL…LQHKPFYRQT (1954 aa)) the chain is Extracellular. One can recognise an Ig-like C2-type 1 domain in the interval 72 to 155 (PRFTTHPSSS…SIFSEKSDVV (84 aa)). Cys95 and Cys138 form a disulfide bridge. Asn164, Asn250, Asn318, and Asn327 each carry an N-linked (GlcNAc...) asparagine glycan. Ig-like C2-type domains are found at residues 261–355 (PEII…ARLQ), 359–445 (PPLF…NSAS), 455–541 (PIME…AYLS), and 546–636 (TQII…ARLS). Intrachain disulfides connect Cys283–Cys336 and Cys382–Cys433. Asn463, Asn485, and Asn491 each carry an N-linked (GlcNAc...) asparagine glycan. Cystine bridges form between Cys476–Cys525 and Cys567–Cys620. N-linked (GlcNAc...) asparagine glycans are attached at residues Asn628, Asn661, Asn707, Asn809, Asn870, Asn942, Asn1019, Asn1094, Asn1109, Asn1172, Asn1203, Asn1282, Asn1329, Asn1379, Asn1414, and Asn1420. Fibronectin type-III domains follow at residues 643-753 (PPSN…LPQE), 758-855 (PPVG…TKEG), 860-967 (PPTN…TMDD), 971-1065 (EVTG…VEPV), 1069-1164 (APTA…TIQA), 1169-1270 (PPFN…TREA), 1275-1372 (GPLD…TFED), 1376-1469 (VPSN…TNNR), 1474-1570 (APSV…TLPA), 1575-1677 (GVGG…VGEA), 1682-1785 (EPRA…TLPG), 1789-1883 (APLH…GPQD), and 1885-1984 (SPVA…TPSK). 2 N-linked (GlcNAc...) asparagine glycosylation sites follow: Asn1843 and Asn1876. A helical transmembrane segment spans residues 2002–2022 (WFMVSLAATSIVIIVMVIAVL). The Cytoplasmic portion of the chain corresponds to 2023-2224 (CVKSKSYKYK…APLPGFSSFV (202 aa)). 2 disordered regions span residues 2068–2157 (TLNS…RSDP) and 2171–2195 (LRQS…PEGS). At Ser2071 the chain carries Phosphoserine. Over residues 2073–2085 (GTLRSGTLGTLGR) the composition is skewed to low complexity. Thr2074 is subject to Phosphothreonine. Composition is skewed to basic and acidic residues over residues 2112–2122 (HSDEESLKCYD) and 2144–2157 (QHSE…RSDP). Ser2113 and Ser2117 each carry phosphoserine.

Belongs to the sidekick family.

It localises to the membrane. Its function is as follows. Participates in homotypic or heterotypic interactions in the eye during pattern formation to prevent extra cells from joining the precluster and differentiating as photoreceptor cells. The polypeptide is Protein sidekick (Drosophila melanogaster (Fruit fly)).